Reading from the N-terminus, the 725-residue chain is Putative coiled-coil domain-containing protein 144B (725 aa).

Residues 1–11 show a composition bias toward basic and acidic residues; that stretch reads MASWGGEKRGG. Disordered stretches follow at residues 1–25, 87–188, 213–260, 453–485, and 528–586; these read MASWGGEKRGGAEGSPKLAVYATRK, AARS…NLTE, LPEN…DCDR, NMNQNSDSGSTNNYKSLKPKLENLSSLPPDSDR, and EEEM…KVKN. Composition is skewed to polar residues over residues 129-150 and 165-178; these read PESLPQNNNPDWHPTNLTLSDE and PSVSPSMPENQSAT. Residues 215-244 adopt a coiled-coil conformation; it reads ENKESKEAEQDLELTSEEEQERLKGCENKQ. Positions 224–234 are enriched in acidic residues; sequence QDLELTSEEEQ. Residues 453–467 show a composition bias toward polar residues; sequence NMNQNSDSGSTNNYK. Positions 490–546 form a coiled coil; it reads YLHEELQQDMQKFKNEVNTLEEEFLALKKENVQLHKEVEEEMEKHRSNSTELSGTLT. Positions 528-537 are enriched in basic and acidic residues; the sequence is EEEMEKHRSN. The span at 543–552 shows a compositional bias: low complexity; that stretch reads GTLTDGTTVG. The segment covering 563-583 has biased composition (basic and acidic residues); sequence PRKENEEHDRPADKTANEKNK. Residues 648–713 adopt a coiled-coil conformation; it reads LLKLKNNHCD…ALKQENGRKE (66 aa).

Belongs to the CCDC144 family.

The sequence is that of Putative coiled-coil domain-containing protein 144B from Homo sapiens (Human).